Consider the following 612-residue polypeptide: MELAMDNSYAFNQRSTCNGIPSEKKNNFLVSEDHGQKILSVLQNFREQNVFYDFKIIMKDEIIPCHRCVLAACSDFFRAMFEVNMKERDDGSVTITNLSSKAVKAFLDYAYTGKTKITDDNVEMFFQLSSFLQVSFLSKACSDFLIKSINLVNCLQLLSISDSYGSTSLFDHALHFVQHHFSLLFKSGDFLEMNFGVLQKCLESDELNVPEEEMVLKVVLSWTKHNLESRQKYLPHLIEKVRLHQLSEETLQDCLFNEESLLKSTNCFDIIMDAIKCVKGSGGLFPDARPSTTEKYIFIHKTEENGENQYTFCYNIKSDSWKILPQSHLIDLPGSSLSSYGEKIFLTGGCKGKCCRTIRLHIAESYHDATDQTWCYCPVKNDFFLVSTMKTPRTMHTSVMALDRLFVIGGKTRGSRDIKSLLDVESYNPLSKEWISVSPLPRGIYYPEASTCQNVIYVLGSEVEITDAFNPSLDCFFKYNAATDQWSELVAEFGQFFHATLIKAVPVNCTLYICDLSTYKVYSFCPDTCVWKGEGSFECAGFNAGAIGIEDKIYILGGDYAPDEITDEVQVYHSNRSEWEEVSPMPRALTEFYCQVIQFNKYRDPWFSNLCA.

A BTB domain is found at 52 to 119 (YDFKIIMKDE…AYTGKTKITD (68 aa)). Residues 150 to 250 (NLVNCLQLLS…VRLHQLSEET (101 aa)) form the BACK domain. Kelch repeat units lie at residues 291–337 (STTE…GSSL), 339–390 (SYGE…STMK), 400–450 (MALD…PEAS), 452–502 (CQNV…ATLI), and 548–595 (GIED…FYCQ).

The protein is Kelch repeat and BTB domain-containing protein 3 of Pongo abelii (Sumatran orangutan).